A 104-amino-acid polypeptide reads, in one-letter code: Large ribosomal subunit protein bL21 (104 aa).

This sequence belongs to the bacterial ribosomal protein bL21 family. In terms of assembly, part of the 50S ribosomal subunit. Contacts protein L20.

Functionally, this protein binds to 23S rRNA in the presence of protein L20. In Francisella philomiragia subsp. philomiragia (strain ATCC 25017 / CCUG 19701 / FSC 153 / O#319-036), this protein is Large ribosomal subunit protein bL21.